The primary structure comprises 485 residues: MHTKTLKELSALLHSKQISATELAQLFLDRIAQSDLNAFLHVDPALTLKEAALADQRLASGDTTVLTGIPIAHKDIFVTRDWRSTAGSKMLENYVSPFDATVVEQFKQAGMVHLGKLNCDEFAMGSSNENSYFGAVKNPWDKAAIPGGSSGGSAAAIAARLTPASTATDTGGSIRQPAALCGVTGIKPTYGSVSRFGMIAFASSLDQGGPIAKTAEDCGLLLNAMTGFDPRDSTSIERDKEDFTRDLNQPLQGLKIGLPREYFGAGLAADVEQAVRAALKEYEKLGATLVDISLPKTELSIPTYYVIAPAEASSNLSRFDGVRYGYRAKDYTDLSDMYRKTRAEGFGEEVKRRILVGAYVLSHGYYDAYYLQAQKIRRLIAQDFQQAFTQCDVIMGPVCPTVAWDLGDKADDPIANYLADIFTLSTSLAGLPGMSIPCGFGQGEKNSKRPVGLQIIGNYFAEAKLLNVAHQYQQATDWHLRQPAE.

Active-site charge relay system residues include Lys74 and Ser149. Ser173 functions as the Acyl-ester intermediate in the catalytic mechanism.

It belongs to the amidase family. GatA subfamily. In terms of assembly, heterotrimer of A, B and C subunits.

The catalysed reaction is L-glutamyl-tRNA(Gln) + L-glutamine + ATP + H2O = L-glutaminyl-tRNA(Gln) + L-glutamate + ADP + phosphate + H(+). Functionally, allows the formation of correctly charged Gln-tRNA(Gln) through the transamidation of misacylated Glu-tRNA(Gln) in organisms which lack glutaminyl-tRNA synthetase. The reaction takes place in the presence of glutamine and ATP through an activated gamma-phospho-Glu-tRNA(Gln). In Janthinobacterium sp. (strain Marseille) (Minibacterium massiliensis), this protein is Glutamyl-tRNA(Gln) amidotransferase subunit A.